The primary structure comprises 205 residues: H/ACA ribonucleoprotein complex subunit GAR1 (205 aa).

Residues M1 to T23 show a composition bias toward gly residues. A disordered region spans residues M1 to Q31. R4 carries the asymmetric dimethylarginine; by HMT1 modification. The interval R4–G21 is RGG-box 1. R8 carries the post-translational modification Asymmetric dimethylarginine; by HMT1; alternate. R8 is modified (omega-N-methylarginine; by HMT1; alternate). R11 is modified (asymmetric dimethylarginine; by HMT1). R15 carries the asymmetric dimethylarginine; by HMT1; alternate modification. R15 carries the omega-N-methylarginine; by HMT1; alternate modification. An Asymmetric dimethylarginine; by HMT1 modification is found at R19. K77 is covalently cross-linked (Glycyl lysine isopeptide (Lys-Gly) (interchain with G-Cter in ubiquitin)). Positions P124 to R205 are disordered. Over residues A143–R205 the composition is skewed to gly residues. R147, R154, and R158 each carry asymmetric dimethylarginine; by HMT1; alternate. 3 positions are modified to omega-N-methylarginine; by HMT1; alternate: R147, R154, and R158. Residues R147–R205 form an RGG-box 2 region. Residue R162 is modified to Asymmetric dimethylarginine; by HMT1. R165 is modified (asymmetric dimethylarginine; by HMT1; alternate). R165 carries the omega-N-methylarginine; by HMT1; alternate modification. An asymmetric dimethylarginine; by HMT1 mark is found at R171 and R174. Omega-N-methylarginine; by HMT1 occurs at positions 180 and 184. At R189 the chain carries Asymmetric dimethylarginine; by HMT1; alternate. Omega-N-methylarginine; by HMT1; alternate is present on R189. An asymmetric dimethylarginine; by HMT1 mark is found at R193, R197, and R201.

Belongs to the GAR1 family. In terms of assembly, component of the small nucleolar ribonucleoprotein particles containing H/ACA-type snoRNAs (H/ACA snoRNPs). The protein component of the H/ACA snoRNP contains CBF5, GAR1, NHP2 and NOP10. The complex contains a stable core composed of CBF5 and NOP10, to which GAR1 and NHP2 subsequently bind. Interacts with snoRNAs. In terms of processing, methylated by HMT1, forming asymmetric dimethylarginines (DMA) within a domain referred to as an RGG box, made up of repeated Gly-Gly dipeptides interspersed with Arg and aromatic residues.

It is found in the nucleus. The protein localises to the nucleolus. Functionally, non-catalytic component of the H/ACA small nucleolar ribonucleoprotein (H/ACA snoRNP), which catalyzes pseudouridylation of rRNA and is required for ribosome biogenesis. This involves the isomerization of uridine such that the ribose is subsequently attached to C5, instead of the normal N1. Pseudouridine ('psi') residues may serve to stabilize the conformation of rRNAs. The H/ACA snoRNP complex also mediates pseudouridylation of other types of RNAs. The H/ACA snoRNP complex mediates pseudouridylation at position 93 in U2 snRNA. Essential for growth. The sequence is that of H/ACA ribonucleoprotein complex subunit GAR1 from Saccharomyces cerevisiae (strain ATCC 204508 / S288c) (Baker's yeast).